We begin with the raw amino-acid sequence, 172 residues long: Methylated-DNA--protein-cysteine methyltransferase (172 aa).

Residue cysteine 142 is the Nucleophile; methyl group acceptor of the active site.

This sequence belongs to the MGMT family.

Its subcellular location is the cytoplasm. The catalysed reaction is a 6-O-methyl-2'-deoxyguanosine in DNA + L-cysteinyl-[protein] = S-methyl-L-cysteinyl-[protein] + a 2'-deoxyguanosine in DNA. It carries out the reaction a 4-O-methyl-thymidine in DNA + L-cysteinyl-[protein] = a thymidine in DNA + S-methyl-L-cysteinyl-[protein]. In terms of biological role, involved in the cellular defense against the biological effects of O6-methylguanine (O6-MeG) and O4-methylthymine (O4-MeT) in DNA. Repairs the methylated nucleobase in DNA by stoichiometrically transferring the methyl group to a cysteine residue in the enzyme. This is a suicide reaction: the enzyme is irreversibly inactivated. In Pyrococcus abyssi (strain GE5 / Orsay), this protein is Methylated-DNA--protein-cysteine methyltransferase.